Here is a 1008-residue protein sequence, read N- to C-terminus: Collagen, type I, alpha 1a (1008 aa).

Positions Ser1–Ser21 are enriched in pro residues. A disordered region spans residues Ser1–Arg920. Residues Asn39–Glu53 show a composition bias toward basic and acidic residues. Residues Thr92–Ala117 are compositionally biased toward low complexity. Over residues Pro119–Pro132 the composition is skewed to pro residues. Over residues Gly133–Gly151 the composition is skewed to gly residues. Composition is skewed to low complexity over residues Pro152–Pro195 and Ser204–Val230. Over residues Gly253–Gly265 the composition is skewed to gly residues. Composition is skewed to low complexity over residues Val339–Lys354 and Leu410–Ala422. Residues Arg423–Lys435 are compositionally biased toward basic and acidic residues. Low complexity-rich tracts occupy residues Asp437–Pro456, Arg489–Ala524, and Ala537–Thr573. The segment covering Pro604–Ala617 has biased composition (pro residues). The span at Pro634–Ala661 shows a compositional bias: low complexity. The segment covering Gly696–Gly709 has biased composition (gly residues). Over residues Pro717–Glu735 the composition is skewed to low complexity. A compositionally biased stretch (pro residues) spans Ala761–Val771. Positions Pro785–Leu806 are enriched in low complexity. Residues Arg807–Gly821 are compositionally biased toward basic and acidic residues. Low complexity predominate over residues Ser832 to Pro868. Pro residues predominate over residues Ala884 to Pro896. Residues Thr978–Leu1008 enclose the Fibrillar collagen NC1 domain.

It belongs to the fibrillar collagen family.

Its subcellular location is the secreted. It localises to the extracellular space. The protein resides in the extracellular matrix. The polypeptide is Collagen, type I, alpha 1a (Epinephelus aeneus (White grouper)).